The following is a 773-amino-acid chain: 5-methyltetrahydropteroyltriglutamate--homocysteine methyltransferase (773 aa).

5-methyltetrahydropteroyltri-L-glutamate-binding positions include 16–19 (RELK) and K116. Residues 437-439 (IGS) and E490 contribute to the L-homocysteine site. Residues 437-439 (IGS) and E490 contribute to the L-methionine site. Residues 521–522 (RC) and W567 each bind 5-methyltetrahydropteroyltri-L-glutamate. D605 lines the L-homocysteine pocket. D605 contacts L-methionine. Position 611 (E611) interacts with 5-methyltetrahydropteroyltri-L-glutamate. Positions 647, 649, and 671 each coordinate Zn(2+). H700 serves as the catalytic Proton donor. C732 contacts Zn(2+).

The protein belongs to the vitamin-B12 independent methionine synthase family. The cofactor is Zn(2+).

It catalyses the reaction 5-methyltetrahydropteroyltri-L-glutamate + L-homocysteine = tetrahydropteroyltri-L-glutamate + L-methionine. The protein operates within amino-acid biosynthesis; L-methionine biosynthesis via de novo pathway; L-methionine from L-homocysteine (MetE route): step 1/1. In terms of biological role, catalyzes the transfer of a methyl group from 5-methyltetrahydrofolate to homocysteine resulting in methionine formation. The protein is 5-methyltetrahydropteroyltriglutamate--homocysteine methyltransferase of Alkalilimnicola ehrlichii (strain ATCC BAA-1101 / DSM 17681 / MLHE-1).